The chain runs to 279 residues: Cell death abnormality protein 2 (279 aa).

The 102-residue stretch at Phe14 to Lys115 folds into the SH2 domain. In terms of domain architecture, SH3 1 spans Pro116–Glu176. The segment at Arg181 to Leu213 is disordered. Residues Ser202–Ile211 are compositionally biased toward polar residues. Residues Gln214–Val277 form the SH3 2 domain.

The protein belongs to the CRK family. In terms of assembly, interacts with ced-5 (via C-terminus which contains a candidate SH3-binding, proline-rich region). Forms a ternary complex with ced-5 and ced-12. Interacts (via SH2 domain) with src-1 (when activated and phosphorylated at 'Tyr-416').

Its function is as follows. Required for cell migration and engulfment of cell corpses but not for programmed cell death/apoptosis. Has a role in the migration of the 2 gonadal distal tip cells (DTCs). Plays a role in protecting dopaminergic neurons from oxidative stress-induced degeneration. In Caenorhabditis elegans, this protein is Cell death abnormality protein 2.